A 515-amino-acid chain; its full sequence is Alpha,alpha-trehalose-phosphate synthase [UDP-forming] 1 (515 aa).

The D-glucose 6-phosphate site is built by Y97 and D151. Residues R287 and K292 each coordinate UDP. UDP-alpha-D-glucose contacts are provided by R287 and K292. R325 is a D-glucose 6-phosphate binding site. Residues V364 and 390–394 (LVAYE) each bind UDP. 386–394 (DGMNLVAYE) contacts UDP-alpha-D-glucose. The disordered stretch occupies residues 483–515 (GKFQSRKAKLPESADAEKPMNGSGESEESQTTQ). The segment covering 491-500 (KLPESADAEK) has biased composition (basic and acidic residues).

The protein belongs to the glycosyltransferase 20 family.

It carries out the reaction D-glucose 6-phosphate + UDP-alpha-D-glucose = alpha,alpha-trehalose 6-phosphate + UDP + H(+). It functions in the pathway carbohydrate biosynthesis. Its function is as follows. Synthase catalytic subunit of the trehalose synthase complex that catalyzes the production of trehalose from glucose-6-phosphate and UDP-alpha-D-glucose in a two step process. The disaccharide trehalose serves as a storage carbohydrate that is mobilized during conidial germination. Regulates the level of trehalose as a protectant for cell integrity during thermal and oxidative stress. This is Alpha,alpha-trehalose-phosphate synthase [UDP-forming] 1 from Aspergillus fumigatus (strain ATCC MYA-4609 / CBS 101355 / FGSC A1100 / Af293) (Neosartorya fumigata).